The following is a 418-amino-acid chain: Bifunctional enzyme IspD/IspF (418 aa).

The segment at 1-261 (MADTPALIPQ…EFKRASDMNF (261 aa)) is 2-C-methyl-D-erythritol 4-phosphate cytidylyltransferase. The segment at 262–418 (RIGEGWDIHA…RATVLLRKFI (157 aa)) is 2-C-methyl-D-erythritol 2,4-cyclodiphosphate synthase. A divalent metal cation-binding residues include Asp268 and His270. Residues 268–270 (DIH) and 294–295 (HS) contribute to the 4-CDP-2-C-methyl-D-erythritol 2-phosphate site. Residue His302 coordinates a divalent metal cation. Residues 316 to 318 (DIG) and 321 to 325 (FPDTD) each bind 4-CDP-2-C-methyl-D-erythritol 2-phosphate.

It in the N-terminal section; belongs to the IspD/TarI cytidylyltransferase family. IspD subfamily. The protein in the C-terminal section; belongs to the IspF family. A divalent metal cation serves as cofactor.

The enzyme catalyses 2-C-methyl-D-erythritol 4-phosphate + CTP + H(+) = 4-CDP-2-C-methyl-D-erythritol + diphosphate. The catalysed reaction is 4-CDP-2-C-methyl-D-erythritol 2-phosphate = 2-C-methyl-D-erythritol 2,4-cyclic diphosphate + CMP. Its pathway is isoprenoid biosynthesis; isopentenyl diphosphate biosynthesis via DXP pathway; isopentenyl diphosphate from 1-deoxy-D-xylulose 5-phosphate: step 2/6. It participates in isoprenoid biosynthesis; isopentenyl diphosphate biosynthesis via DXP pathway; isopentenyl diphosphate from 1-deoxy-D-xylulose 5-phosphate: step 4/6. Bifunctional enzyme that catalyzes the formation of 4-diphosphocytidyl-2-C-methyl-D-erythritol from CTP and 2-C-methyl-D-erythritol 4-phosphate (MEP) (IspD), and catalyzes the conversion of 4-diphosphocytidyl-2-C-methyl-D-erythritol 2-phosphate (CDP-ME2P) to 2-C-methyl-D-erythritol 2,4-cyclodiphosphate (ME-CPP) with a corresponding release of cytidine 5-monophosphate (CMP) (IspF). This Albidiferax ferrireducens (strain ATCC BAA-621 / DSM 15236 / T118) (Rhodoferax ferrireducens) protein is Bifunctional enzyme IspD/IspF.